Consider the following 107-residue polypeptide: Heme-degrading monooxygenase (107 aa).

Residues 2–94 form the ABM domain; sequence IIVTNTAKIT…YILDNKISYY (93 aa). Residue Asn-6 participates in Fe cation binding. His-76 contacts heme.

It belongs to the antibiotic biosynthesis monooxygenase family. Heme-degrading monooxygenase IsdG subfamily. Homodimer.

It localises to the cytoplasm. The catalysed reaction is heme b + 3 reduced [NADPH--hemoprotein reductase] + 3 O2 = biliverdin IXalpha + CO + Fe(2+) + 3 oxidized [NADPH--hemoprotein reductase] + 3 H2O + H(+). Its function is as follows. Allows bacterial pathogens to use the host heme as an iron source. Catalyzes the oxidative degradation of the heme macrocyclic porphyrin ring to the biliverdin in the presence of a suitable electron donor such as ascorbate or NADPH--cytochrome P450 reductase, with subsequent release of free iron. This Bacillus cereus (strain AH187) protein is Heme-degrading monooxygenase.